The sequence spans 125 residues: Ribonuclease P protein component 1 (125 aa).

Over residues 1–13 the composition is skewed to basic and acidic residues; sequence MRRNGKEGKDRAP. The tract at residues 1–24 is disordered; sequence MRRNGKEGKDRAPGRPQRKGQEVA.

It belongs to the eukaryotic/archaeal RNase P protein component 1 family. Consists of a catalytic RNA component and at least 4-5 protein subunits.

Its subcellular location is the cytoplasm. The catalysed reaction is Endonucleolytic cleavage of RNA, removing 5'-extranucleotides from tRNA precursor.. In terms of biological role, part of ribonuclease P, a protein complex that generates mature tRNA molecules by cleaving their 5'-ends. In Thermococcus onnurineus (strain NA1), this protein is Ribonuclease P protein component 1.